Reading from the N-terminus, the 319-residue chain is Beta-ketoacyl-[acyl-carrier-protein] synthase III (319 aa).

Catalysis depends on residues Cys113 and His246. The segment at 247–251 is ACP-binding; sequence QANLR. Asn276 is an active-site residue.

It belongs to the thiolase-like superfamily. FabH family. As to quaternary structure, homodimer.

The protein localises to the cytoplasm. The catalysed reaction is malonyl-[ACP] + acetyl-CoA + H(+) = 3-oxobutanoyl-[ACP] + CO2 + CoA. It participates in lipid metabolism; fatty acid biosynthesis. Catalyzes the condensation reaction of fatty acid synthesis by the addition to an acyl acceptor of two carbons from malonyl-ACP. Catalyzes the first condensation reaction which initiates fatty acid synthesis and may therefore play a role in governing the total rate of fatty acid production. Possesses both acetoacetyl-ACP synthase and acetyl transacylase activities. Its substrate specificity determines the biosynthesis of branched-chain and/or straight-chain of fatty acids. This Chromobacterium violaceum (strain ATCC 12472 / DSM 30191 / JCM 1249 / CCUG 213 / NBRC 12614 / NCIMB 9131 / NCTC 9757 / MK) protein is Beta-ketoacyl-[acyl-carrier-protein] synthase III.